Here is an 852-residue protein sequence, read N- to C-terminus: RNA-binding protein 10 (852 aa).

Basic and acidic residues-rich tracts occupy residues 1-14 (MEYE…DRTG) and 21-45 (RSQD…RSYP). The segment at 1-78 (MEYERRGGRG…RGQLQSHGVQ (78 aa)) is disordered. In terms of domain architecture, RRM 1 spans 37 to 132 (RDMDYRSYPR…QKVSMHYSDP (96 aa)). S61 is subject to Phosphoserine. The RanBP2-type zinc-finger motif lies at 135–165 (KINEDWLCNKCGVQNFKRREKCFKCGVPKSE). Residues 223-307 (DTIILRNLNP…KTINVEFAKG (85 aa)) form the RRM 2 domain. Position 306 is an N6-acetyllysine (K306). 6 disordered regions span residues 343-365 (GGES…QQDE), 386-410 (KGPG…EGGT), 426-446 (APGL…ATNS), 459-489 (SELQ…YPVP), 542-568 (EQSA…HKTK), and 634-675 (DLPK…EEKL). Residues 430 to 446 (YQQSAEGSSGQGTATNS) are compositionally biased toward polar residues. The segment covering 463–484 (SPTHPSSALPPATSPTAPESYS) has biased composition (low complexity). The span at 545 to 561 (ADGHKDTGASSKEGKEK) shows a compositional bias: basic and acidic residues. Phosphoserine occurs at positions 640, 645, 655, 658, and 660. Residues 665 to 675 (ERGGPEREEKL) show a composition bias toward basic and acidic residues. The C2H2-type; atypical zinc finger occupies 681–706 (LACLLCRRQFPSKEALIRHQQLSGLH). Phosphoserine occurs at positions 703, 719, and 767. The disordered stretch occupies residues 740 to 783 (AAERREKYGIPEPPEPKRRKYGGISTASVDFEQPTRDGLGSDNI). Positions 780–826 (SDNIGSRMLQAMGWKEGSGLGRKKQGIVTPIEAQTRVRGSGLGARGS) constitute a G-patch domain. The residue at position 824 (R824) is an Omega-N-methylarginine.

As to quaternary structure, associates with the spliceosome. Component of a large chromatin remodeling complex, at least composed of MYSM1, PCAF, RBM10 and KIF11/TRIP5.

The protein resides in the nucleus. Binds to ssRNA containing the consensus sequence 5'-AGGUAA-3'. May be involved in post-transcriptional processing, most probably in mRNA splicing. Binds to RNA homopolymers, with a preference for poly(G) and poly(U) and little for poly(A). May bind to specific miRNA hairpins. This Rattus norvegicus (Rat) protein is RNA-binding protein 10.